Reading from the N-terminus, the 376-residue chain is MAPKKTATKATAAKGNDRQKALDAALALIEKDFGKGAVMRLGDENRPPIQTISSGNTAIDIALGIGGFPRGRIVEVYGPESSGKTTVALHAIAQAQKAGGIAAFIDAEHALDPDYARKLGVDTDALLVSQPDTGEQALEIADMLVRSGAIDIIVIDSVAALTPKAEIEGEMGDSHVGLQARLMSQALRKMTGALYNSGTTAIFINQLREKIGVMFGSPETTTGGKALKFYASVRCDIRRIQTLKDGQDAIGNRTRLKVVKNKVSPPFKIAEFDIMYGEGISRESSVIDLAVDNGIVKKSGSWFTYEGEQLGQGKEKVRLSLKENPELTDELEDKIFKKLGVGKYAAASDELTDDPVELVPNVDFDDEADTEADAED.

78–85 (GPESSGKT) is a binding site for ATP. The segment at 355–376 (PVELVPNVDFDDEADTEADAED) is disordered. The span at 363–376 (DFDDEADTEADAED) shows a compositional bias: acidic residues.

The protein belongs to the RecA family.

Its subcellular location is the cytoplasm. Can catalyze the hydrolysis of ATP in the presence of single-stranded DNA, the ATP-dependent uptake of single-stranded DNA by duplex DNA, and the ATP-dependent hybridization of homologous single-stranded DNAs. It interacts with LexA causing its activation and leading to its autocatalytic cleavage. The chain is Protein RecA from Corynebacterium glutamicum (strain R).